The sequence spans 218 residues: Histidine biosynthesis bifunctional protein HisIE (218 aa).

A phosphoribosyl-AMP cyclohydrolase region spans residues 1–118 (MTDLSELNFD…DAPDTGLDGT (118 aa)). The tract at residues 119 to 218 (LERVYATITE…SGLKGPKEVG (100 aa)) is phosphoribosyl-ATP pyrophosphohydrolase.

It in the N-terminal section; belongs to the PRA-CH family. In the C-terminal section; belongs to the PRA-PH family.

Its subcellular location is the cytoplasm. The enzyme catalyses 1-(5-phospho-beta-D-ribosyl)-ATP + H2O = 1-(5-phospho-beta-D-ribosyl)-5'-AMP + diphosphate + H(+). It carries out the reaction 1-(5-phospho-beta-D-ribosyl)-5'-AMP + H2O = 1-(5-phospho-beta-D-ribosyl)-5-[(5-phospho-beta-D-ribosylamino)methylideneamino]imidazole-4-carboxamide. It participates in amino-acid biosynthesis; L-histidine biosynthesis; L-histidine from 5-phospho-alpha-D-ribose 1-diphosphate: step 2/9. Its pathway is amino-acid biosynthesis; L-histidine biosynthesis; L-histidine from 5-phospho-alpha-D-ribose 1-diphosphate: step 3/9. The polypeptide is Histidine biosynthesis bifunctional protein HisIE (hisI) (Deinococcus radiodurans (strain ATCC 13939 / DSM 20539 / JCM 16871 / CCUG 27074 / LMG 4051 / NBRC 15346 / NCIMB 9279 / VKM B-1422 / R1)).